A 366-amino-acid polypeptide reads, in one-letter code: tRNA/tmRNA (uracil-C(5))-methyltransferase (366 aa).

5 residues coordinate S-adenosyl-L-methionine: Q189, Y217, N222, E238, and D298. The Nucleophile role is filled by C323. E357 acts as the Proton acceptor in catalysis.

Belongs to the class I-like SAM-binding methyltransferase superfamily. RNA M5U methyltransferase family. TrmA subfamily.

It carries out the reaction uridine(54) in tRNA + S-adenosyl-L-methionine = 5-methyluridine(54) in tRNA + S-adenosyl-L-homocysteine + H(+). The enzyme catalyses uridine(341) in tmRNA + S-adenosyl-L-methionine = 5-methyluridine(341) in tmRNA + S-adenosyl-L-homocysteine + H(+). Dual-specificity methyltransferase that catalyzes the formation of 5-methyluridine at position 54 (m5U54) in all tRNAs, and that of position 341 (m5U341) in tmRNA (transfer-mRNA). The chain is tRNA/tmRNA (uracil-C(5))-methyltransferase from Shewanella putrefaciens (strain CN-32 / ATCC BAA-453).